Reading from the N-terminus, the 106-residue chain is Large ribosomal subunit protein uL23 (106 aa).

It belongs to the universal ribosomal protein uL23 family. Part of the 50S ribosomal subunit. Contacts protein L29, and trigger factor when it is bound to the ribosome.

In terms of biological role, one of the early assembly proteins it binds 23S rRNA. One of the proteins that surrounds the polypeptide exit tunnel on the outside of the ribosome. Forms the main docking site for trigger factor binding to the ribosome. The sequence is that of Large ribosomal subunit protein uL23 from Neisseria gonorrhoeae (strain ATCC 700825 / FA 1090).